The sequence spans 861 residues: DNA mismatch repair protein MutS (861 aa).

618-625 (GPNMGGKS) is an ATP binding site.

This sequence belongs to the DNA mismatch repair MutS family.

In terms of biological role, this protein is involved in the repair of mismatches in DNA. It is possible that it carries out the mismatch recognition step. This protein has a weak ATPase activity. The chain is DNA mismatch repair protein MutS from Shewanella sp. (strain ANA-3).